We begin with the raw amino-acid sequence, 138 residues long: Putative pre-16S rRNA nuclease (138 aa).

The protein belongs to the YqgF nuclease family.

Its subcellular location is the cytoplasm. Its function is as follows. Could be a nuclease involved in processing of the 5'-end of pre-16S rRNA. The protein is Putative pre-16S rRNA nuclease of Glaesserella parasuis serovar 5 (strain SH0165) (Haemophilus parasuis).